A 94-amino-acid chain; its full sequence is Integration host factor subunit beta (94 aa).

This sequence belongs to the bacterial histone-like protein family. In terms of assembly, heterodimer of an alpha and a beta chain.

This protein is one of the two subunits of integration host factor, a specific DNA-binding protein that functions in genetic recombination as well as in transcriptional and translational control. The protein is Integration host factor subunit beta of Yersinia enterocolitica serotype O:8 / biotype 1B (strain NCTC 13174 / 8081).